The chain runs to 129 residues: Small ribosomal subunit protein bS6 (129 aa).

The segment covering Phe-110 to Thr-121 has biased composition (basic and acidic residues). The interval Phe-110 to Glu-129 is disordered.

The protein belongs to the bacterial ribosomal protein bS6 family.

Functionally, binds together with bS18 to 16S ribosomal RNA. In Aeromonas salmonicida (strain A449), this protein is Small ribosomal subunit protein bS6.